We begin with the raw amino-acid sequence, 943 residues long: AP-1 complex subunit beta-1 (943 aa).

Lys-318 is subject to N6-acetyllysine. Residue Tyr-574 is modified to 3'-nitrotyrosine. Positions 584–621 (GGRGVVHKSLPPRTASSESTESPETAPAGAPAGDQPDV) are disordered. A compositionally biased stretch (low complexity) spans 594 to 616 (PPRTASSESTESPETAPAGAPAG).

This sequence belongs to the adaptor complexes large subunit family. As to quaternary structure, adaptor protein complex 1 (AP-1) is a heterotetramer composed of two large adaptins (gamma-type subunit AP1G1 and beta-type subunit AP1B1), a medium adaptin (mu-type subunit AP1M1 or AP1M2) and a small adaptin (sigma-type subunit AP1S1 or AP1S2 or AP1S3). In terms of tissue distribution, widely expressed.

Its subcellular location is the cytoplasmic vesicle. The protein localises to the clathrin-coated vesicle membrane. It localises to the golgi apparatus. Its function is as follows. Subunit of clathrin-associated adaptor protein complex 1 that plays a role in protein sorting in the late-Golgi/trans-Golgi network (TGN) and/or endosomes. The AP complexes mediate both the recruitment of clathrin to membranes and the recognition of sorting signals within the cytosolic tails of transmembrane cargo molecules. The sequence is that of AP-1 complex subunit beta-1 (Ap1b1) from Mus musculus (Mouse).